A 392-amino-acid chain; its full sequence is Formate-dependent phosphoribosylglycinamide formyltransferase (392 aa).

N(1)-(5-phospho-beta-D-ribosyl)glycinamide contacts are provided by residues 22 to 23 (EL) and glutamate 82. Residues arginine 114, lysine 155, 160-165 (SSGKGQ), 195-198 (EGVV), and glutamate 203 each bind ATP. Positions 119–308 (RLAAEELQLP…EFALHVRAFL (190 aa)) constitute an ATP-grasp domain. Glutamate 267 and glutamate 279 together coordinate Mg(2+). N(1)-(5-phospho-beta-D-ribosyl)glycinamide-binding positions include aspartate 286, lysine 355, and 362–363 (RR).

Belongs to the PurK/PurT family. Homodimer.

The enzyme catalyses N(1)-(5-phospho-beta-D-ribosyl)glycinamide + formate + ATP = N(2)-formyl-N(1)-(5-phospho-beta-D-ribosyl)glycinamide + ADP + phosphate + H(+). It participates in purine metabolism; IMP biosynthesis via de novo pathway; N(2)-formyl-N(1)-(5-phospho-D-ribosyl)glycinamide from N(1)-(5-phospho-D-ribosyl)glycinamide (formate route): step 1/1. Its function is as follows. Involved in the de novo purine biosynthesis. Catalyzes the transfer of formate to 5-phospho-ribosyl-glycinamide (GAR), producing 5-phospho-ribosyl-N-formylglycinamide (FGAR). Formate is provided by PurU via hydrolysis of 10-formyl-tetrahydrofolate. The polypeptide is Formate-dependent phosphoribosylglycinamide formyltransferase (Shigella boydii serotype 4 (strain Sb227)).